Here is a 222-residue protein sequence, read N- to C-terminus: UPF0128 protein TK2294 (222 aa).

It belongs to the UPF0128 family.

This chain is UPF0128 protein TK2294, found in Thermococcus kodakarensis (strain ATCC BAA-918 / JCM 12380 / KOD1) (Pyrococcus kodakaraensis (strain KOD1)).